A 436-amino-acid polypeptide reads, in one-letter code: GTPase Der (436 aa).

EngA-type G domains are found at residues P4–E167 and I175–N351. Residues G10–S17, D57–I61, N119–D122, G181–S188, D229–M233, and N294–D297 each bind GTP. The 85-residue stretch at K352–K436 folds into the KH-like domain.

The protein belongs to the TRAFAC class TrmE-Era-EngA-EngB-Septin-like GTPase superfamily. EngA (Der) GTPase family. In terms of assembly, associates with the 50S ribosomal subunit.

Its function is as follows. GTPase that plays an essential role in the late steps of ribosome biogenesis. This chain is GTPase Der, found in Streptococcus agalactiae serotype Ia (strain ATCC 27591 / A909 / CDC SS700).